The following is a 265-amino-acid chain: Metal-activated transcriptional activator protein AMT1 (265 aa).

The copper-fist DNA-binding region spans 1 to 40 (MVVINGVKYACDSCIKSHKAAQCEHNDRPLKILKPRGRPP). Zn(2+) contacts are provided by C11, C14, C23, and H25. Residues 103-129 (RRKRTQKSNKKDNLSINSPTNNSPSPA) are disordered. Residues 119–128 (NSPTNNSPSP) are compositionally biased toward low complexity.

Its subcellular location is the nucleus. Trans-acting regulatory protein that activates transcription of the MT genes (metallothionein) in response to copper or silver ions. This Candida glabrata (strain ATCC 2001 / BCRC 20586 / JCM 3761 / NBRC 0622 / NRRL Y-65 / CBS 138) (Yeast) protein is Metal-activated transcriptional activator protein AMT1 (AMT1).